Here is a 569-residue protein sequence, read N- to C-terminus: MARKTVAAALALVAGAAVAVTGNAPAQAVPPGEKDVTAVMFEWNFASVARECTDRLGPAGYGYVQVSPPQEHLQGGQWWTSYQPVSYKIAGRLGDRTAFKNMIDTCHAAGVKVVADSVINHMANGSGTGTGGTSFSKYDYPGLYSGSDMDDCRATISNYQDRANVQNCELVQLPDLDTGEDHVRGKIAGYLNDLASLGVDGFRIDAAKHMPAADLANIKSRLTNPNVFWKLEAIHGAGEAVSPSEYLGSGDVQEFRYARDLKRVLQGEKLSYLKNFGEAWGHMPSGQSGVFVDNHDTERGGDTLSYKDGANYTLASVFMLAWPYGSPDVHSGYEWTDKDAGPPNNGQVNACYTDGWKCQHAWREISSMVAFRNTARGQAVTNWWDNGNNAIAFGRGSKAYVAINHETSALTRTFQTSLPAGSYCDVQSNTPVTVNSSGQFTATLAANTAVALHVNATGCGSTPTTPPTTPPATSGASFNVTATTVVGQNIYVTGNRAELGNWAPASALKLDPATYPVWKLTVGLPAGTSFEYKYIRKDAAGNVTWESGANRTATVPASGQLVLNDTFRS.

A signal peptide spans 1 to 28 (MARKTVAAALALVAGAAVAVTGNAPAQA). Ca(2+) is bound by residues N120, Q166, and D175. D205 (nucleophile) is an active-site residue. H209 contributes to the Ca(2+) binding site. E232 acts as the Proton donor in catalysis. The CBM20 domain maps to 468–569 (TTPPATSGAS…QLVLNDTFRS (102 aa)).

Belongs to the glycosyl hydrolase 13 family. In terms of assembly, monomer. The cofactor is Ca(2+).

It carries out the reaction Endohydrolysis of (1-&gt;4)-alpha-D-glucosidic linkages in polysaccharides containing three or more (1-&gt;4)-alpha-linked D-glucose units.. The chain is Alpha-amylase (aml) from Streptomyces violaceus (Streptomyces venezuelae).